Here is a 176-residue protein sequence, read N- to C-terminus: Neuropeptide-like protein 1 (176 aa).

The first 19 residues, 1–19 (MKATFVLACLLVIAAVSHA), serve as a signal peptide directing secretion. The disordered stretch occupies residues 59 to 79 (GKRSAEQNEQANKEDKATSDK). Basic and acidic residues predominate over residues 61 to 79 (RSAEQNEQANKEDKATSDK).

In terms of biological role, in AWC olfactory sensory neurons, required for the detection of preferred food sources. This chain is Neuropeptide-like protein 1 (nlp-1), found in Caenorhabditis elegans.